Consider the following 145-residue polypeptide: Transcriptional anti-antiactivator ExsC (145 aa).

As to quaternary structure, homodimer. Interacts with ExsE. Interacts directly with ExsD to form a heterotetrameric complex.

The protein localises to the cytoplasm. In the absence of inducing signals, ExsE interacts with and inhibits ExsC activity. Its function is as follows. Part of the regulatory cascade that plays a role in the transcriptional regulation of the type III secretion system (T3SS). Interacts with antiactivator ExsD to inhibit its activity leading to ExsA-mediated transcription. The chain is Transcriptional anti-antiactivator ExsC (exsC) from Pseudomonas aeruginosa (strain ATCC 15692 / DSM 22644 / CIP 104116 / JCM 14847 / LMG 12228 / 1C / PRS 101 / PAO1).